Reading from the N-terminus, the 1766-residue chain is Putative ATP-dependent RNA helicase R366 (1766 aa).

Positions 209 to 239 (KSSSNQNSNQSNQESNESNQEPNESNQEINQ) are disordered. Residues 210 to 239 (SSSNQNSNQSNQESNESNQEPNESNQEINQ) show a composition bias toward low complexity. The 210-residue stretch at 656–865 (YHHYSNNRVL…RYYRRINDNR (210 aa)) folds into the Helicase ATP-binding domain. 669 to 676 (GATGVGKS) serves as a coordination point for ATP. The short motif at 812–815 (DEAH) is the DEAH box element. One can recognise a Helicase C-terminal domain in the interval 947 to 1116 (DIHKSIKAIN…TMVKLIKSYP (170 aa)).

It belongs to the DEAD box helicase family. DEAH subfamily.

The catalysed reaction is ATP + H2O = ADP + phosphate + H(+). This is Putative ATP-dependent RNA helicase R366 from Acanthamoeba polyphaga mimivirus (APMV).